The chain runs to 66 residues: DNA-directed RNA polymerase subunit Rpo10 (66 aa).

Cys-7, Cys-10, Cys-44, and Cys-45 together coordinate Zn(2+).

Belongs to the archaeal Rpo10/eukaryotic RPB10 RNA polymerase subunit family. As to quaternary structure, part of the RNA polymerase complex. Zn(2+) serves as cofactor.

It localises to the cytoplasm. The enzyme catalyses RNA(n) + a ribonucleoside 5'-triphosphate = RNA(n+1) + diphosphate. Functionally, DNA-dependent RNA polymerase (RNAP) catalyzes the transcription of DNA into RNA using the four ribonucleoside triphosphates as substrates. The chain is DNA-directed RNA polymerase subunit Rpo10 from Pyrobaculum neutrophilum (strain DSM 2338 / JCM 9278 / NBRC 100436 / V24Sta) (Thermoproteus neutrophilus).